A 318-amino-acid chain; its full sequence is Ribose-phosphate pyrophosphokinase (318 aa).

ATP-binding positions include 46–48 (DGE) and 105–106 (RQ). Residues histidine 139 and aspartate 178 each contribute to the Mg(2+) site. Lysine 201 is an active-site residue. Residues arginine 203, aspartate 227, and 231-235 (DTAGT) contribute to the D-ribose 5-phosphate site.

It belongs to the ribose-phosphate pyrophosphokinase family. Class I subfamily. In terms of assembly, homohexamer. The cofactor is Mg(2+).

The protein localises to the cytoplasm. It carries out the reaction D-ribose 5-phosphate + ATP = 5-phospho-alpha-D-ribose 1-diphosphate + AMP + H(+). It functions in the pathway metabolic intermediate biosynthesis; 5-phospho-alpha-D-ribose 1-diphosphate biosynthesis; 5-phospho-alpha-D-ribose 1-diphosphate from D-ribose 5-phosphate (route I): step 1/1. Its function is as follows. Involved in the biosynthesis of the central metabolite phospho-alpha-D-ribosyl-1-pyrophosphate (PRPP) via the transfer of pyrophosphoryl group from ATP to 1-hydroxyl of ribose-5-phosphate (Rib-5-P). The protein is Ribose-phosphate pyrophosphokinase of Helicobacter pylori (strain ATCC 700392 / 26695) (Campylobacter pylori).